Here is an 804-residue protein sequence, read N- to C-terminus: G-type lectin S-receptor-like serine/threonine-protein kinase At1g61490 (804 aa).

A signal peptide spans 1–24 (MGKKRIVFFACLLLFTVLLRFSYA). Residues 25 to 144 (GITTESPLSV…ASGRTLWESF (120 aa)) enclose the Bulb-type lectin domain. Over 25-425 (GITTESPLSV…SELGGNKRNK (401 aa)) the chain is Extracellular. 6 N-linked (GlcNAc...) asparagine glycosylation sites follow: Asn53, Asn94, Asn117, Asn134, Asn236, and Asn267. An EGF-like domain is found at 278–314 (PANSCDIYGVCGPFGLCIVSVPLKCKCLKGFVPHSTE). 2 disulfides stabilise this stretch: Cys282/Cys294 and Cys288/Cys302. Residues Asn320, Asn336, and Asn375 are each glycosylated (N-linked (GlcNAc...) asparagine). A PAN domain is found at 333–415 (CQGNSTGKDV…GEILSIRLAH (83 aa)). 2 cysteine pairs are disulfide-bonded: Cys368-Cys389 and Cys372-Cys378. A helical transmembrane segment spans residues 426 to 446 (IIVASTVSLSLFVILTSAAFG). The Cytoplasmic portion of the chain corresponds to 447-804 (FWRYRVKHKA…EMTQSMILGR (358 aa)). A Protein kinase domain is found at 490-775 (FSLSNKLGQG…DLPSPKQPTF (286 aa)). ATP is bound by residues 496-504 (LGQGGFGSV) and Lys518. 2 positions are modified to phosphoserine: Ser524 and Ser539. Positions 579-596 (RKKLEVDWPKRFDIVQGI) are caM-binding. Asp615 serves as the catalytic Proton acceptor. Phosphoserine is present on residues Ser619 and Ser632. A Phosphothreonine modification is found at Thr649. Position 692 is a phosphoserine (Ser692).

This sequence belongs to the protein kinase superfamily. Ser/Thr protein kinase family.

The protein resides in the cell membrane. The catalysed reaction is L-seryl-[protein] + ATP = O-phospho-L-seryl-[protein] + ADP + H(+). It carries out the reaction L-threonyl-[protein] + ATP = O-phospho-L-threonyl-[protein] + ADP + H(+). The protein is G-type lectin S-receptor-like serine/threonine-protein kinase At1g61490 of Arabidopsis thaliana (Mouse-ear cress).